The following is a 1074-amino-acid chain: Transmembrane protein 132E (1074 aa).

An N-terminal signal peptide occupies residues Met-1–Ala-23. At Arg-26–Ala-894 the chain is on the extracellular side. N-linked (GlcNAc...) asparagine glycans are attached at residues Asn-70 and Asn-91. Disordered regions lie at residues Pro-205–Ala-224 and Gly-243–Thr-266. Residues Ser-247–Ala-262 are compositionally biased toward low complexity. N-linked (GlcNAc...) asparagine glycosylation is found at Asn-320 and Asn-401. Disordered regions lie at residues Arg-564–Gly-587 and Gly-816–Pro-867. Residues Gly-843–Gly-854 are compositionally biased toward low complexity. Residues Leu-895–Leu-915 traverse the membrane as a helical segment. Over Arg-916 to Ala-1074 the chain is Cytoplasmic. A disordered region spans residues Val-962–His-1064. Composition is skewed to low complexity over residues Ser-973–His-985 and Phe-1016–Glu-1026. The segment covering Gly-1035–Leu-1044 has biased composition (acidic residues).

It belongs to the TMEM132 family. In terms of tissue distribution, widely expressed, with highest levels in the cochlea. In the cochlea, detected in spiral ganglion, the organ of Corti and stria vascularis. In the organ of Corti, prominently expressed in the outer and inner hair cells, especially at the apical and basal region of the outer hair cell body (at protein level).

Its subcellular location is the membrane. Required for normal inner ear hair cell function and hearing. The polypeptide is Transmembrane protein 132E (Tmem132e) (Mus musculus (Mouse)).